We begin with the raw amino-acid sequence, 139 residues long: ATP synthase epsilon chain (139 aa).

This sequence belongs to the ATPase epsilon chain family. As to quaternary structure, F-type ATPases have 2 components, CF(1) - the catalytic core - and CF(0) - the membrane proton channel. CF(1) has five subunits: alpha(3), beta(3), gamma(1), delta(1), epsilon(1). CF(0) has three main subunits: a, b and c.

It is found in the cell inner membrane. In terms of biological role, produces ATP from ADP in the presence of a proton gradient across the membrane. The protein is ATP synthase epsilon chain of Pseudomonas putida (strain ATCC 700007 / DSM 6899 / JCM 31910 / BCRC 17059 / LMG 24140 / F1).